A 66-amino-acid chain; its full sequence is Beta-toxin Cbo1 (66 aa).

One can recognise an LCN-type CS-alpha/beta domain in the interval 1 to 66; it reads KEGYLVNHST…VWPLPKKTCN (66 aa). 4 disulfide bridges follow: Cys-12-Cys-65, Cys-16-Cys-41, Cys-25-Cys-46, and Cys-29-Cys-48. Asn-66 is subject to Asparagine amide.

This sequence belongs to the long (4 C-C) scorpion toxin superfamily. Sodium channel inhibitor family. Beta subfamily. As to expression, expressed by the venom gland.

It is found in the secreted. Its function is as follows. Beta toxins bind voltage-independently at site-4 of sodium channels and shift the voltage of activation toward more negative potentials thereby affecting sodium channel activation and promoting spontaneous and repetitive firing. Is active on the human voltage-gated sodium channel Nav1.6/SCN8A when tested at 200 nM. In vivo, is toxic to mice when intraperitoneally injected. The chain is Beta-toxin Cbo1 from Centruroides bonito (Scorpion).